The chain runs to 159 residues: Succinate dehydrogenase [ubiquinone] cytochrome b small subunit, mitochondrial (159 aa).

A mitochondrion-targeting transit peptide spans 1-56 (MAVLLKLGVLCSGQGARALLLRSRVVRPAYVSAFLQDQPTQGRCGTQHIHLSPSHH). The Mitochondrial matrix portion of the chain corresponds to 57–63 (SGSKAAS). The chain crosses the membrane as a helical span at residues 64-85 (LHWTSERVVSVLLLGLIPAGYL). Topologically, residues 86-90 (NPCSV) are mitochondrial intermembrane. Residues 91 to 111 (VDYSLAAALTLHSHWGLGQVV) traverse the membrane as a helical segment. His102 is a binding site for heme b. At 112–120 (TDYVHGDTL) the chain is on the mitochondrial matrix side. Residue Tyr114 coordinates a ubiquinone. Residues 121-142 (PKAARAGLLALSALTFAGLCYF) traverse the membrane as a helical segment. Residues 143–159 (NYHDVGICRAVAMLWKL) lie on the Mitochondrial intermembrane side of the membrane.

The protein belongs to the CybS family. Component of complex II composed of four subunits: the flavoprotein (FP) SDHA, iron-sulfur protein (IP) SDHB, and a cytochrome b560 composed of SDHC and SDHD.

It localises to the mitochondrion inner membrane. The protein operates within carbohydrate metabolism; tricarboxylic acid cycle. Functionally, membrane-anchoring subunit of succinate dehydrogenase (SDH) that is involved in complex II of the mitochondrial electron transport chain and is responsible for transferring electrons from succinate to ubiquinone (coenzyme Q). SDH also oxidizes malate to the non-canonical enol form of oxaloacetate, enol-oxaloacetate. Enol-oxaloacetate, which is a potent inhibitor of the succinate dehydrogenase activity, is further isomerized into keto-oxaloacetate. The chain is Succinate dehydrogenase [ubiquinone] cytochrome b small subunit, mitochondrial (Sdhd) from Mus musculus (Mouse).